The primary structure comprises 85 residues: Small proline-rich protein 2D (85 aa).

Residues 1-11 (MSYQQQQCKQP) show a composition bias toward low complexity. The segment at 1 to 20 (MSYQQQQCKQPCQPPPVCPP) is disordered. 4 repeat units span residues 21 to 29 (KKCPEPCPP), 30 to 38 (LKCPEPCPP), 39 to 47 (PKCPEPCPP), and 48 to 56 (PKCPEPCPE). The 4 X 9 AA approximate tandem repeats stretch occupies residues 21 to 56 (KKCPEPCPPLKCPEPCPPPKCPEPCPPPKCPEPCPE). The tract at residues 57 to 85 (PCPPPSCQQKCPPAQPPPPCQQKCPPKSK) is disordered.

It belongs to the cornifin (SPRR) family. In terms of tissue distribution, expressed in uterus.

It is found in the cytoplasm. In terms of biological role, cross-linked envelope protein of keratinocytes. It is a keratinocyte protein that first appears in the cell cytosol, but ultimately becomes cross-linked to membrane proteins by transglutaminase. All that results in the formation of an insoluble envelope beneath the plasma membrane. The chain is Small proline-rich protein 2D (Sprr2d) from Mus musculus (Mouse).